A 149-amino-acid polypeptide reads, in one-letter code: 3-dehydroquinate dehydratase (149 aa).

The Proton acceptor role is filled by Tyr26. Substrate contacts are provided by Asn77, His83, and Asp90. Catalysis depends on His103, which acts as the Proton donor. Substrate-binding positions include 104-105 (LS) and Arg114.

Belongs to the type-II 3-dehydroquinase family. As to quaternary structure, homododecamer.

It catalyses the reaction 3-dehydroquinate = 3-dehydroshikimate + H2O. Its pathway is metabolic intermediate biosynthesis; chorismate biosynthesis; chorismate from D-erythrose 4-phosphate and phosphoenolpyruvate: step 3/7. Its function is as follows. Catalyzes a trans-dehydration via an enolate intermediate. This chain is 3-dehydroquinate dehydratase, found in Haemophilus influenzae (strain PittEE).